The primary structure comprises 221 residues: Probable septum site-determining protein MinC (221 aa).

The protein belongs to the MinC family. Interacts with MinD and FtsZ.

Functionally, cell division inhibitor that blocks the formation of polar Z ring septums. Rapidly oscillates between the poles of the cell to destabilize FtsZ filaments that have formed before they mature into polar Z rings. Prevents FtsZ polymerization. The protein is Probable septum site-determining protein MinC of Shewanella oneidensis (strain ATCC 700550 / JCM 31522 / CIP 106686 / LMG 19005 / NCIMB 14063 / MR-1).